Reading from the N-terminus, the 591-residue chain is uncharacterized protein (591 aa).

Residues 1 to 10 (MSIRGVGGNG) are compositionally biased toward gly residues. 4 disordered regions span residues 1–37 (MSIR…KVED), 110–135 (RSSA…GYRE), 324–344 (EESG…AQGP), and 487–517 (GHYQ…TPPL). Polar residues predominate over residues 11–32 (NSRIPSHNGDGSNRRSQNTKGN). Residues 110–132 (RSSATRAAESGSSSRTARGASSG) are compositionally biased toward low complexity. A compositionally biased stretch (basic and acidic residues) spans 490-507 (QDPRASDYDLPRASDYDL).

This sequence to C.muridarum TC_0268.

This is an uncharacterized protein from Chlamydia trachomatis serovar D (strain ATCC VR-885 / DSM 19411 / UW-3/Cx).